The chain runs to 335 residues: NmrA-like family domain-containing oxidoreductase lnbB (335 aa).

NADP(+) contacts are provided by residues 14 to 18 (GTGNQ), 41 to 45 (RHPDS), 62 to 63 (DG), 83 to 85 (TNS), lysine 142, and 166 to 169 (YYEQ).

This sequence belongs to the NmrA-type oxidoreductase family.

It participates in secondary metabolite biosynthesis. In terms of biological role, nmrA-like family domain-containing oxidoreductase; part of the lnb gene cluster that mediates the biosynthesis of diastereomeric piperazines. Lna and lnb clusters encode sets of enzymes that produce overlapping sets of previously undescribed metabolites such as piperazinomycin-like metabolites or morpholine. The lna and lnb biosynthetic pathways appear to be part of a signaling network that controls the formation of sclerotia, a resilient overwintering structure. One primary function of the non-canonical nonribosomal peptide synthetases lnaA and lnbA consists in the reduction of L-tyrosine. The presence in the clusters of tailoring enzymes such as the oxidoreductases lnaB, lnbB, lnaE or lnbE, as well as of the cytochrome P450 monooxygenases lnaC, lnaD, or lnbC, might explain formation of various diastereomeric piperazines. In Aspergillus flavus (strain ATCC 200026 / FGSC A1120 / IAM 13836 / NRRL 3357 / JCM 12722 / SRRC 167), this protein is NmrA-like family domain-containing oxidoreductase lnbB.